A 139-amino-acid polypeptide reads, in one-letter code: Nucleoside diphosphate kinase (139 aa).

ATP contacts are provided by Lys9, Phe57, Arg85, Thr91, Arg102, and Asn112. His115 functions as the Pros-phosphohistidine intermediate in the catalytic mechanism.

Belongs to the NDK family. In terms of assembly, homotetramer. Mg(2+) serves as cofactor.

The protein localises to the cytoplasm. It carries out the reaction a 2'-deoxyribonucleoside 5'-diphosphate + ATP = a 2'-deoxyribonucleoside 5'-triphosphate + ADP. The catalysed reaction is a ribonucleoside 5'-diphosphate + ATP = a ribonucleoside 5'-triphosphate + ADP. Its function is as follows. Major role in the synthesis of nucleoside triphosphates other than ATP. The ATP gamma phosphate is transferred to the NDP beta phosphate via a ping-pong mechanism, using a phosphorylated active-site intermediate. This Neorickettsia sennetsu (strain ATCC VR-367 / Miyayama) (Ehrlichia sennetsu) protein is Nucleoside diphosphate kinase.